Reading from the N-terminus, the 237-residue chain is MKNIQILFQTLNIFPKNLVLYKQALTHSSYSNEQTPPQEDNERLEFLGDAIVGLLMADYLYSQSKEDEGIMTKKRAQAVCEKSLTIYAQKIELQNYLLLGKGEKNKDFNAKGIMADTFEALFGAIYLDLGYLTAKKVFHNIVLPHLAKTIYIIDFKTQLQEIVQSEKKTIQYKIVQEQGPAHSKNFVAEVYLEKNLLGTGEGSTKKSAEQKAAQQALSKVAKTKDLIKNKGVKEKEL.

In terms of domain architecture, RNase III spans 4 to 130 (IQILFQTLNI…LFGAIYLDLG (127 aa)). A Mg(2+)-binding site is contributed by Glu45. The active site involves Asp49. Residues Asp116 and Glu119 each coordinate Mg(2+). The active site involves Glu119. Residues 154–222 (DFKTQLQEIV…AQQALSKVAK (69 aa)) form the DRBM domain.

This sequence belongs to the ribonuclease III family. In terms of assembly, homodimer. The cofactor is Mg(2+).

The protein resides in the cytoplasm. The catalysed reaction is Endonucleolytic cleavage to 5'-phosphomonoester.. Functionally, digests double-stranded RNA. Involved in the processing of primary rRNA transcript to yield the immediate precursors to the large and small rRNAs (23S and 16S). Processes some mRNAs, and tRNAs when they are encoded in the rRNA operon. Processes pre-crRNA and tracrRNA of type II CRISPR loci if present in the organism. The polypeptide is Ribonuclease 3 (Aster yellows witches'-broom phytoplasma (strain AYWB)).